The chain runs to 621 residues: Proton pump-interactor BIP131 (621 aa).

Residues 250 to 305 adopt a coiled-coil conformation; it reads IDEVKRDRQAVRDKIKVLEDQIHAVDGEIAALQDDLTAATARKDKAFEALNELRKT. Over residues 374 to 387 the composition is skewed to basic and acidic residues; it reads SRDGRMRNPDEKPI. Residues 374–572 are disordered; sequence SRDGRMRNPD…RSTVTKTKTP (199 aa). Low complexity predominate over residues 430–441; the sequence is KAPAKAAKAKQP. A compositionally biased stretch (basic and acidic residues) spans 448-516; the sequence is PDVHDDEPPK…AEKKLKEKEK (69 aa). A coiled-coil region spans residues 466 to 524; the sequence is EAKLKEMKRQEEIEKNKLALERKKKQAEKQAMKAAARAEKEAEKKLKEKEKKARKRSAT. The chain crosses the membrane as a helical span at residues 589–609; the sequence is WGAPMAALAAALVALLGALVY.

This sequence belongs to the plant proton pump-interactor protein family. Interacts with BRI1.

The protein resides in the cell membrane. In terms of biological role, may regulate plasma membrane ATPase activity. The polypeptide is Proton pump-interactor BIP131 (Oryza sativa subsp. japonica (Rice)).